Here is a 355-residue protein sequence, read N- to C-terminus: Protein RecA (355 aa).

ATP is bound at residue 67–74 (GPESSGKT).

This sequence belongs to the RecA family.

The protein resides in the cytoplasm. Functionally, can catalyze the hydrolysis of ATP in the presence of single-stranded DNA, the ATP-dependent uptake of single-stranded DNA by duplex DNA, and the ATP-dependent hybridization of homologous single-stranded DNAs. It interacts with LexA causing its activation and leading to its autocatalytic cleavage. The polypeptide is Protein RecA (Shewanella halifaxensis (strain HAW-EB4)).